We begin with the raw amino-acid sequence, 344 residues long: uncharacterized protein (344 aa).

Positions 190–232 are disordered; the sequence is SGKRVRSAKKSGADAARASEGATCDRASSESVSPTARPPAQAS.

This is an uncharacterized protein from Treponema pallidum (strain Nichols).